Reading from the N-terminus, the 1032-residue chain is uncharacterized protein (1032 aa).

Residues 1–17 (MYEEIRMKFTDIFIRRP) are Cytoplasmic-facing. Residues 18 to 36 (VLAVSISLLMIILGLQAIS) form a helical membrane-spanning segment. The Periplasmic segment spans residues 37 to 337 (KLAVREYPKM…TIAINSSIHE (301 aa)). The chain crosses the membrane as a helical span at residues 338–357 (VIKTIGEATLIVLVVILMFI). The Cytoplasmic segment spans residues 358–363 (GSFRAI). The chain crosses the membrane as a helical span at residues 364-383 (LIPILAIPISLIGVLMLLQS). At 384–389 (FNFSIN) the chain is on the periplasmic side. Residues 390–411 (LMTLLALILAIGLVVDDAIVVL) traverse the membrane as a helical segment. Residues 412-438 (ENIDRHIKAGETPFRAAIIGTREIAVP) lie on the Cytoplasmic side of the membrane. The chain crosses the membrane as a helical span at residues 439–457 (VISMTIALIAVYSPMALMG). Residues 458 to 470 (GITGTLFKEFALT) are Periplasmic-facing. A helical membrane pass occupies residues 471–493 (LAGAVFISGVVALTLSPMMSSKL). Topologically, residues 494–529 (LKSNAKPTWMEERVEHTLGKVNRVYEYMLDLVMLNR) are cytoplasmic. The helical transmembrane segment at 530–548 (KSMLAFAVVIFSTLPFLFN) threads the bilayer. The Periplasmic portion of the chain corresponds to 549–852 (SLSSELTPNE…ARQLVQEGNA (304 aa)). Residues 853-872 (LAVTFALAVIIIFLVLAIQF) traverse the membrane as a helical segment. Over 873-878 (ESIRDP) the chain is Cytoplasmic. A helical transmembrane segment spans residues 879 to 898 (MVIMISVPLAVSGALVSLNI). The Periplasmic portion of the chain corresponds to 899 to 910 (LSFFSIAGTTLN). Residues 911–932 (IYSQVGLITLVGLITKHGILMC) form a helical membrane-spanning segment. The Cytoplasmic segment spans residues 933 to 960 (EVAKEEQLNHGKTRIEAITHAAKVRLRP). The chain crosses the membrane as a helical span at residues 961–979 (ILMTTAAMVAGLIPLLYAT). The Periplasmic portion of the chain corresponds to 980-992 (GAGAVSRFSIGIV). Residues 993 to 1015 (IVAGLSIGTIFTLFVLPVVYSYV) form a helical membrane-spanning segment. The Cytoplasmic segment spans residues 1016-1032 (ATEHKPLPVFDENKTTH).

The protein belongs to the resistance-nodulation-cell division (RND) (TC 2.A.6) family.

The protein localises to the cell inner membrane. Functionally, could be a drug efflux pump. This is an uncharacterized protein from Haemophilus influenzae (strain ATCC 51907 / DSM 11121 / KW20 / Rd).